Reading from the N-terminus, the 774-residue chain is E3 ubiquitin-protein ligase RFWD3 (774 aa).

Disordered stretches follow at residues 32–126 and 203–281; these read GTIE…TAGA and PYPL…SAME. 2 positions are modified to phosphoserine; by ATM and ATR: Ser59 and Ser75. A compositionally biased stretch (acidic residues) spans 92 to 103; it reads LTEEVQPSEENM. The segment covering 108–121 has biased composition (polar residues); sequence PGTSEEPSQGSGAN. Positions 223 to 242 are enriched in acidic residues; it reads SDSDGSAEDEEVVVQAEEPE. The RING-type; degenerate zinc-finger motif lies at 288-332; sequence CTICLEQWTNAGDHRISALRCGHLFGFRCISKWLKGQTRKCPQCN. Residues 358–403 adopt a coiled-coil conformation; that stretch reads RMKSDLLNEQMLRKQAELESAQCRLQLQVLIDKCTKLNSRVQDLEK. WD repeat units follow at residues 493–535, 536–568, and 583–628; these read IPMH…VVQT, YNTGRPVWSCCWCLDENNYVYAGLASGSILIYD, and KARC…SHKP.

As to quaternary structure, interacts with MDM2 and p53/TP53. Binds to the RPA complex via direct interaction with RPA2. Interacts with RAD51. In terms of processing, phosphorylated at Ser-59 and Ser-75 upon DNA damage by ATM or ATR. ATM phosphorylation occurs at early times upon DNA damage, while ATR is the major kinase at later times. Phosphorylation by ATM and ATR is required to stabilize p53/TP53. Part of the phosphorylation depends upon RPA2 presence.

The protein resides in the nucleus. The protein localises to the PML body. Its subcellular location is the cytoplasm. The enzyme catalyses S-ubiquitinyl-[E2 ubiquitin-conjugating enzyme]-L-cysteine + [acceptor protein]-L-lysine = [E2 ubiquitin-conjugating enzyme]-L-cysteine + N(6)-ubiquitinyl-[acceptor protein]-L-lysine.. The protein operates within protein modification; protein ubiquitination. E3 ubiquitin-protein ligase required for the repair of DNA interstrand cross-links (ICL) in response to DNA damage. Plays a key role in RPA-mediated DNA damage signaling and repair. Acts by mediating ubiquitination of the RPA complex (RPA1, RPA2 and RPA3 subunits) and RAD51 at stalled replication forks, leading to remove them from DNA damage sites and promote homologous recombination. Also mediates the ubiquitination of p53/TP53 in the late response to DNA damage, and acts as a positive regulator of p53/TP53 stability, thereby regulating the G1/S DNA damage checkpoint. May act by catalyzing the formation of short polyubiquitin chains on p53/TP53 that are not targeted to the proteasome. In response to ionizing radiation, interacts with MDM2 and enhances p53/TP53 ubiquitination, possibly by restricting MDM2 from extending polyubiquitin chains on ubiquitinated p53/TP53. Required to translesion DNA synthesis across DNA-protein cross-link adducts by catalyzing ubiquitination of proteins on single-stranded DNA (ssDNA). This chain is E3 ubiquitin-protein ligase RFWD3 (Rfwd3), found in Mus musculus (Mouse).